Here is a 481-residue protein sequence, read N- to C-terminus: Surface lipoprotein assembly modifier 2 (481 aa).

The first 24 residues, 1–24 (MKNGVKQLFLLSLIGLSLTNVAWA), serve as a signal peptide directing secretion. Positions 24–192 (AEVARPKNDT…QYLLTLNQRN (169 aa)) are N-terminal domain. The segment at 193–481 (QWIWQVGLNF…RIYLEIGKIF (289 aa)) is C-terminal probable beta barrel. 14 beta stranded membrane passes run 194-204 (WIWQVGLNFLN), 223-243 (AWEKESGQGVGYSLSVEKKWP), 248-257 (FFSKTMFNGN), 271-281 (TVRIGGGLGYQ), 285-295 (VEVSLFPFQEK), 315-325 (LGIRLENVDWL), 329-339 (WQISTALEYGE), 353-363 (YFVSSTLFYLP), 368-377 (FWFVGMDFHR), 390-399 (KTLRLGWGQD), 404-414 (ISSRLTFSYAN), 432-441 (YTTTITLWHR), 448-458 (LTPKLSWDYQK), and 471-481 (NRIYLEIGKIF).

Belongs to the Slam family.

Its subcellular location is the cell outer membrane. Functionally, required for correct export to the cell surface of some cell outer membrane lipoproteins. In Haemophilus influenzae (strain ATCC 51907 / DSM 11121 / KW20 / Rd), this protein is Surface lipoprotein assembly modifier 2.